Consider the following 626-residue polypeptide: E3 ubiquitin-protein ligase HRD1 (626 aa).

The N-terminal stretch at 1–15 is a signal peptide; the sequence is MQLLLSSVCMALTSA. The Lumenal segment spans residues 16–38; the sequence is VIGFAYYQKQQFYPAVVYITKSN. Residues 39–59 form a helical membrane-spanning segment; it reads ASMGVIYIQFFVIVFMFGKLL. At 60–96 the chain is on the cytoplasmic side; the sequence is SKIFLGTLRAAEFEHLLERFWYALTETCLAFTVFRDD. A helical membrane pass occupies residues 97 to 117; that stretch reads FNPRFVALFTVLLFLKSFHWL. Over 118-128 the chain is Lumenal; that stretch reads AEERVDFMERS. The chain crosses the membrane as a helical span at residues 129–149; that stretch reads PVLGWLFHIRVGSLLTVLGIL. Topologically, residues 150–167 are cytoplasmic; the sequence is DYVLLIHAYNSTLVRGPT. The helical transmembrane segment at 168-188 threads the bilayer; the sequence is VQLVFGFEYAILLTVIASTAI. Residues 189–222 lie on the Lumenal side of the membrane; sequence KYVLHAAEMRTDTPWENKAVFLLYTELVIGLIKV. Residues 223 to 243 traverse the membrane as a helical segment; it reads VLYILFVVIMAKIYALPMFVF. Positions 234-268 are interaction with p53/TP53; sequence KIYALPMFVFRPMFFTIRNFRKALNDVIMSRRAIR. Topologically, residues 244-626 are cytoplasmic; the sequence is RPMFFTIRNF…AATNERTTAE (383 aa). Residues 289 to 328 form an RING-type; atypical zinc finger; the sequence is CIICREDMVNHSKKLPCGHIFHTTCLRSWFQRQQTCPTCR. Residues 569–600 are disordered; sequence DADEDDIPSTATEAVSIPNSDADFEENSSELG. The span at 577-587 shows a compositional bias: polar residues; sequence STATEAVSIPN.

Belongs to the HRD1 family. Homodimer. Interacts with p53. May interact with Septin2.

It is found in the endoplasmic reticulum membrane. It carries out the reaction S-ubiquitinyl-[E2 ubiquitin-conjugating enzyme]-L-cysteine + [acceptor protein]-L-lysine = [E2 ubiquitin-conjugating enzyme]-L-cysteine + N(6)-ubiquitinyl-[acceptor protein]-L-lysine.. The protein operates within protein modification; protein ubiquitination. Functionally, acts as an E3 ubiquitin-protein ligase which accepts ubiquitin specifically from endoplasmic reticulum-associated UBC7 E2 ligase and transfers it to substrates, promoting their degradation. Component of the endoplasmic reticulum quality control (ERQC) system also called ER-associated degradation (ERAD) involved in ubiquitin-dependent degradation of misfolded endoplasmic reticulum proteins. Also promotes the degradation of normal but naturally short-lived proteins. Protects cells from ER stress-induced apoptosis. Sequesters p53 in the cytoplasm and promotes its degradation, thereby negatively regulating its biological function in transcription, cell cycle regulation and apoptosis. This Drosophila melanogaster (Fruit fly) protein is E3 ubiquitin-protein ligase HRD1 (sip3).